We begin with the raw amino-acid sequence, 322 residues long: Glycerol-3-phosphate dehydrogenase [NAD(P)+] (322 aa).

Residues Trp11, Arg31, Arg32, and Lys101 each contribute to the NADPH site. Residues Lys101 and Gly130 each coordinate sn-glycerol 3-phosphate. Residue Ala134 coordinates NADPH. Residues Lys184, Asp237, Ser247, Arg248, and Asn249 each contribute to the sn-glycerol 3-phosphate site. Lys184 functions as the Proton acceptor in the catalytic mechanism. Arg248 is an NADPH binding site. 2 residues coordinate NADPH: Val270 and Glu272.

It belongs to the NAD-dependent glycerol-3-phosphate dehydrogenase family.

It localises to the cytoplasm. It carries out the reaction sn-glycerol 3-phosphate + NAD(+) = dihydroxyacetone phosphate + NADH + H(+). The catalysed reaction is sn-glycerol 3-phosphate + NADP(+) = dihydroxyacetone phosphate + NADPH + H(+). The protein operates within membrane lipid metabolism; glycerophospholipid metabolism. Its function is as follows. Catalyzes the reduction of the glycolytic intermediate dihydroxyacetone phosphate (DHAP) to sn-glycerol 3-phosphate (G3P), the key precursor for phospholipid synthesis. This Thermus thermophilus (strain ATCC BAA-163 / DSM 7039 / HB27) protein is Glycerol-3-phosphate dehydrogenase [NAD(P)+].